The sequence spans 130 residues: Small ribosomal subunit protein uS9 (130 aa).

It belongs to the universal ribosomal protein uS9 family.

This is Small ribosomal subunit protein uS9 from Aster yellows witches'-broom phytoplasma (strain AYWB).